We begin with the raw amino-acid sequence, 1406 residues long: DNA-directed RNA polymerase subunit beta' (1406 aa).

Zn(2+)-binding residues include Cys70, Cys72, Cys85, and Cys88. The Mg(2+) site is built by Asp460, Asp462, and Asp464. Zn(2+) is bound by residues Cys814, Cys889, Cys896, and Cys899.

Belongs to the RNA polymerase beta' chain family. As to quaternary structure, the RNAP catalytic core consists of 2 alpha, 1 beta, 1 beta' and 1 omega subunit. When a sigma factor is associated with the core the holoenzyme is formed, which can initiate transcription. The cofactor is Mg(2+). Zn(2+) serves as cofactor.

The enzyme catalyses RNA(n) + a ribonucleoside 5'-triphosphate = RNA(n+1) + diphosphate. DNA-dependent RNA polymerase catalyzes the transcription of DNA into RNA using the four ribonucleoside triphosphates as substrates. The protein is DNA-directed RNA polymerase subunit beta' of Stenotrophomonas maltophilia (strain K279a).